We begin with the raw amino-acid sequence, 374 residues long: Tryptophan--tRNA ligase (374 aa).

The 'HIGH' region motif lies at 81-89 (PSGPVHIGH). The 'KMSKS' region motif lies at 258 to 262 (KMSAS).

Belongs to the class-I aminoacyl-tRNA synthetase family.

The protein localises to the cytoplasm. It carries out the reaction tRNA(Trp) + L-tryptophan + ATP = L-tryptophyl-tRNA(Trp) + AMP + diphosphate + H(+). The chain is Tryptophan--tRNA ligase from Pyrobaculum calidifontis (strain DSM 21063 / JCM 11548 / VA1).